A 192-amino-acid polypeptide reads, in one-letter code: Protein GrpE (192 aa).

The interval 1-34 (MSSKEQKTPNEQVSEEMENTAEQQVEATQETGEC) is disordered. A compositionally biased stretch (polar residues) spans 20 to 31 (TAEQQVEATQET).

This sequence belongs to the GrpE family. Homodimer.

The protein resides in the cytoplasm. Its function is as follows. Participates actively in the response to hyperosmotic and heat shock by preventing the aggregation of stress-denatured proteins, in association with DnaK and GrpE. It is the nucleotide exchange factor for DnaK and may function as a thermosensor. Unfolded proteins bind initially to DnaJ; upon interaction with the DnaJ-bound protein, DnaK hydrolyzes its bound ATP, resulting in the formation of a stable complex. GrpE releases ADP from DnaK; ATP binding to DnaK triggers the release of the substrate protein, thus completing the reaction cycle. Several rounds of ATP-dependent interactions between DnaJ, DnaK and GrpE are required for fully efficient folding. This Yersinia pestis protein is Protein GrpE.